A 187-amino-acid chain; its full sequence is Resolvase OPG149 (187 aa).

Belongs to the RuvC family. Poxviruses-type subfamily. Mg(2+) serves as cofactor.

Its function is as follows. Plays a role in DNA replication by cleaving viral DNA concatamers to yield unit-length viral genomes. The concatamer junctions contain inverted repeat sequences that can be extruded as cruciforms, yielding Holliday junctions that A22 protein cleaves. This Vaccinia virus (strain Western Reserve) (VACV) protein is Resolvase OPG149 (OPG149).